Consider the following 396-residue polypeptide: Major outer membrane porin, serovar A (396 aa).

Residues 1-22 (MKKLLKSVLVFAALSSASSLQA) form the signal peptide.

The protein belongs to the chlamydial porin (CP) (TC 1.B.2) family. As to quaternary structure, part of a disulfide cross-linked outer membrane complex (COMC) composed of the major outer membrane porin (MOMP), the small cysteine-rich protein (OmcA) and the large cysteine-rich periplasmic protein (OmcB).

The protein resides in the cell outer membrane. Its function is as follows. In elementary bodies (EBs, the infectious stage, which is able to survive outside the host cell) provides the structural integrity of the outer envelope through disulfide cross-links with the small cysteine-rich protein and the large cysteine-rich periplasmic protein. It has been described in publications as the Sarkosyl-insoluble COMC (Chlamydia outer membrane complex), and serves as the functional equivalent of peptidoglycan. Functionally, permits diffusion of specific solutes through the outer membrane. This is Major outer membrane porin, serovar A (ompA) from Chlamydia trachomatis.